The sequence spans 216 residues: MSFKNPVLGLCQQAAFMLSAARVDQCPADDGLEVAFAGRSNAGKSSALNTLTHANLARTSKTPGRTQLLNFFRLDDRRRLVDLPGYGYAKVPIPLKQHWQHHLEAYLGSRRSLAGVVLLMDIRHPLTDFDRMMLDWAGASGMPMHILLTKADKLAFGAAKNALLKVRREIHKGWGEGMSVQLFSAPKRQGVEEAHDVLARWLGLAGDDGGEADAGA.

In terms of domain architecture, EngB-type G spans 30 to 204; sequence DGLEVAFAGR…HDVLARWLGL (175 aa). Residues 38–45, 64–68, 82–85, 149–152, and 182–185 contribute to the GTP site; these read GRSNAGKS, GRTQL, DLPG, TKAD, and LFSA. Mg(2+)-binding residues include S45 and T66.

It belongs to the TRAFAC class TrmE-Era-EngA-EngB-Septin-like GTPase superfamily. EngB GTPase family. Requires Mg(2+) as cofactor.

Its function is as follows. Necessary for normal cell division and for the maintenance of normal septation. The protein is Probable GTP-binding protein EngB of Azotobacter vinelandii (strain DJ / ATCC BAA-1303).